The sequence spans 450 residues: Bifunctional protein GlmU (450 aa).

The pyrophosphorylase stretch occupies residues Met-1–Arg-229. UDP-N-acetyl-alpha-D-glucosamine is bound by residues Leu-8–Gly-11, Lys-22, Gln-72, and Gly-77–Thr-78. Residue Asp-102 coordinates Mg(2+). Residues Gly-139, Glu-154, and Asn-227 each contribute to the UDP-N-acetyl-alpha-D-glucosamine site. Asn-227 is a binding site for Mg(2+). The interval Val-230–Asn-250 is linker. The interval Gly-251–Lys-450 is N-acetyltransferase. Arg-332 and Lys-350 together coordinate UDP-N-acetyl-alpha-D-glucosamine. His-362 acts as the Proton acceptor in catalysis. The UDP-N-acetyl-alpha-D-glucosamine site is built by Tyr-365 and Asn-376. Residues Asn-385–Tyr-386, Ala-422, and Arg-439 contribute to the acetyl-CoA site.

In the N-terminal section; belongs to the N-acetylglucosamine-1-phosphate uridyltransferase family. It in the C-terminal section; belongs to the transferase hexapeptide repeat family. Homotrimer. Requires Mg(2+) as cofactor.

It localises to the cytoplasm. The catalysed reaction is alpha-D-glucosamine 1-phosphate + acetyl-CoA = N-acetyl-alpha-D-glucosamine 1-phosphate + CoA + H(+). The enzyme catalyses N-acetyl-alpha-D-glucosamine 1-phosphate + UTP + H(+) = UDP-N-acetyl-alpha-D-glucosamine + diphosphate. It functions in the pathway nucleotide-sugar biosynthesis; UDP-N-acetyl-alpha-D-glucosamine biosynthesis; N-acetyl-alpha-D-glucosamine 1-phosphate from alpha-D-glucosamine 6-phosphate (route II): step 2/2. It participates in nucleotide-sugar biosynthesis; UDP-N-acetyl-alpha-D-glucosamine biosynthesis; UDP-N-acetyl-alpha-D-glucosamine from N-acetyl-alpha-D-glucosamine 1-phosphate: step 1/1. The protein operates within bacterial outer membrane biogenesis; LPS lipid A biosynthesis. Functionally, catalyzes the last two sequential reactions in the de novo biosynthetic pathway for UDP-N-acetylglucosamine (UDP-GlcNAc). The C-terminal domain catalyzes the transfer of acetyl group from acetyl coenzyme A to glucosamine-1-phosphate (GlcN-1-P) to produce N-acetylglucosamine-1-phosphate (GlcNAc-1-P), which is converted into UDP-GlcNAc by the transfer of uridine 5-monophosphate (from uridine 5-triphosphate), a reaction catalyzed by the N-terminal domain. This chain is Bifunctional protein GlmU, found in Staphylococcus aureus (strain NCTC 8325 / PS 47).